Reading from the N-terminus, the 153-residue chain is uncharacterized protein (153 aa).

The tract at residues 19–46 (EKSTRLEEDAMESEPLAGTKTRGRGRRR) is disordered.

This is an uncharacterized protein from Homo sapiens (Human).